The chain runs to 147 residues: Hemoglobin subunit beta-1/2 (147 aa).

V2 bears the N-acetylvaline mark. The Globin domain maps to H3–H147. Residue T13 is modified to Phosphothreonine. A Phosphoserine modification is found at S45. K60 bears the N6-acetyllysine mark. H64 contacts heme b. K83 carries the N6-acetyllysine modification. H93 serves as a coordination point for heme b. C94 carries the post-translational modification S-nitrosocysteine. An N6-acetyllysine modification is found at K145.

It belongs to the globin family. As to quaternary structure, heterotetramer of two alpha chains and two beta chains. Red blood cells.

In terms of biological role, involved in oxygen transport from the lung to the various peripheral tissues. This is Hemoglobin subunit beta-1/2 (HBB1) from Oryctolagus cuniculus (Rabbit).